Consider the following 496-residue polypeptide: Thiamine transporter 2 (496 aa).

Residues 1 to 7 are Cytoplasmic-facing; that stretch reads MDCYRTS. Residues 8-28 form a helical membrane-spanning segment; sequence LSSSWIYPTVILCLFGFFSMM. The Extracellular segment spans residues 29–53; it reads RPSEPFLIPYLSGPDKNLTSAEITN. A glycan (N-linked (GlcNAc...) asparagine) is linked at N45. A helical membrane pass occupies residues 54-74; sequence EIFPVWTYSYLVLLLPVFVLT. Residues 75–81 are Cytoplasmic-facing; the sequence is DYVRYKP. A helical membrane pass occupies residues 82 to 102; sequence VIILQGISFIITWLLLLFGQG. Over 103 to 110 the chain is Extracellular; that stretch reads VKTMQVVE. Residues 111–131 traverse the membrane as a helical segment; that stretch reads FFYGMVTAAEVAYYAYIYSVV. The Cytoplasmic portion of the chain corresponds to 132–144; that stretch reads SPEHYQRVSGYCR. The helical transmembrane segment at 145-165 threads the bilayer; it reads SVTLAAYTAGSVLAQLLVSLA. N-linked (GlcNAc...) asparagine glycosylation occurs at N166. At 166 to 169 the chain is on the extracellular side; sequence NMSY. The helical transmembrane segment at 170–190 threads the bilayer; the sequence is FYLNVISLASVSVAFLFSLFL. Over 191-282 the chain is Cytoplasmic; the sequence is PMPKKSMFFH…YSSKRLFYWS (92 aa). Residues 283-303 form a helical membrane-spanning segment; the sequence is LWWAFATAGFNQVLNYVQILW. Topologically, residues 304–316 are extracellular; the sequence is DYKAPSQDSSIYN. Residues 317 to 337 traverse the membrane as a helical segment; that stretch reads GAVEAIATFGGAVAAFAVGYV. Residues 338–342 lie on the Cytoplasmic side of the membrane; that stretch reads KVNWD. The helical transmembrane segment at 343-363 threads the bilayer; it reads LLGELALVVFSVVNAGSLFLM. Over 364-375 the chain is Extracellular; it reads HYTANIWACYAG. The helical transmembrane segment at 376–396 threads the bilayer; that stretch reads YLIFKSSYMLLITIAVFQIAV. Residues 397-405 lie on the Cytoplasmic side of the membrane; it reads NLNVERYAL. Residues 406-426 form a helical membrane-spanning segment; it reads VFGINTFIALVIQTIMTVIVV. At 427-434 the chain is on the extracellular side; the sequence is DQRGLNLP. Residues 435-455 form a helical membrane-spanning segment; it reads VSIQFLVYGSYFAVIAGIFLM. At 456–496 the chain is on the cytoplasmic side; it reads RSMYITYSTKSQKDVQSPAPSENPDVSHPEEESNIIMSTKL. A disordered region spans residues 468-496; the sequence is KDVQSPAPSENPDVSHPEEESNIIMSTKL.

Belongs to the reduced folate carrier (RFC) transporter (TC 2.A.48) family. In terms of tissue distribution, widely expressed but most abundant in placenta, kidney and liver.

The protein resides in the membrane. The catalysed reaction is thiamine(out) + H(+)(in) = thiamine(in) + H(+)(out). It catalyses the reaction pyridoxine(out) + n H(+)(out) = pyridoxine(in) + n H(+)(in). Its activity is regulated as follows. Pyridoxine transport is inhibited by carbonyl cyanide p-trifluoromethoxyphenylhydrazone (FCCP) and carbonyl cyanide m-chlorophenylhydrazone (CCCP). Its function is as follows. Mediates high affinity thiamine uptake, probably via a proton anti-port mechanism. Has no folate transport activity. Mediates H(+)-dependent pyridoxine transport. In Homo sapiens (Human), this protein is Thiamine transporter 2 (SLC19A3).